Consider the following 736-residue polypeptide: Gingipain R2 (736 aa).

Residues methionine 1–alanine 24 form the signal peptide. Residues glutamine 25–arginine 229 constitute a propeptide that is removed on maturation. Aspartate 307, valine 329, aspartate 332, tyrosine 334, glutamate 336, glutamate 390, and histidine 395 together coordinate Ca(2+). Histidine 440 (proton donor) is an active-site residue. Cysteine 473 (nucleophile) is an active-site residue. Ca(2+) contacts are provided by phenylalanine 478, glutamate 487, aspartate 521, glutamate 522, glutamate 525, histidine 531, aspartate 613, and glutamate 639.

Belongs to the peptidase C25 family.

The protein localises to the secreted. It carries out the reaction Hydrolysis of proteins and small molecule substrates, with a preference for Arg in P1.. Its activity is regulated as follows. Inhibited by human histatin-3 1/24 (histatin-5). In terms of biological role, thiol protease. Acts synergistically with RgpA to catalyze the maturation of fimbrial subunits, such as FimA. Its proteolytic activity is a major factor in both periodontal tissue destruction and in evasion of host defense mechanisms. This chain is Gingipain R2 (rgpB), found in Porphyromonas gingivalis (strain ATCC BAA-308 / W83).